The primary structure comprises 355 residues: tRNA N6-adenosine threonylcarbamoyltransferase (355 aa).

Fe cation-binding residues include H110 and H114. Residues 132-136, D165, G178, D182, and N288 each bind substrate; that span reads LVSGG. D316 is a binding site for Fe cation.

The protein belongs to the KAE1 / TsaD family. Requires Fe(2+) as cofactor.

It is found in the cytoplasm. The catalysed reaction is L-threonylcarbamoyladenylate + adenosine(37) in tRNA = N(6)-L-threonylcarbamoyladenosine(37) in tRNA + AMP + H(+). Its function is as follows. Required for the formation of a threonylcarbamoyl group on adenosine at position 37 (t(6)A37) in tRNAs that read codons beginning with adenine. Is involved in the transfer of the threonylcarbamoyl moiety of threonylcarbamoyl-AMP (TC-AMP) to the N6 group of A37, together with TsaE and TsaB. TsaD likely plays a direct catalytic role in this reaction. The protein is tRNA N6-adenosine threonylcarbamoyltransferase of Lawsonia intracellularis (strain PHE/MN1-00).